We begin with the raw amino-acid sequence, 132 residues long: Small ribosomal subunit protein uS8c (132 aa).

Belongs to the universal ribosomal protein uS8 family. In terms of assembly, part of the 30S ribosomal subunit.

It is found in the plastid. The protein resides in the chloroplast. Its function is as follows. One of the primary rRNA binding proteins, it binds directly to 16S rRNA central domain where it helps coordinate assembly of the platform of the 30S subunit. This Acorus calamus (Sweet flag) protein is Small ribosomal subunit protein uS8c (rps8).